The primary structure comprises 553 residues: Dihydroxy-acid dehydratase (553 aa).

Residue D78 coordinates Mg(2+). Position 119 (C119) interacts with [2Fe-2S] cluster. D120 and K121 together coordinate Mg(2+). K121 carries the post-translational modification N6-carboxylysine. A [2Fe-2S] cluster-binding site is contributed by C191. Mg(2+) is bound at residue E444. S470 serves as the catalytic Proton acceptor.

It belongs to the IlvD/Edd family. In terms of assembly, homodimer. Requires [2Fe-2S] cluster as cofactor. Mg(2+) serves as cofactor.

It carries out the reaction (2R)-2,3-dihydroxy-3-methylbutanoate = 3-methyl-2-oxobutanoate + H2O. It catalyses the reaction (2R,3R)-2,3-dihydroxy-3-methylpentanoate = (S)-3-methyl-2-oxopentanoate + H2O. Its pathway is amino-acid biosynthesis; L-isoleucine biosynthesis; L-isoleucine from 2-oxobutanoate: step 3/4. It functions in the pathway amino-acid biosynthesis; L-valine biosynthesis; L-valine from pyruvate: step 3/4. Its function is as follows. Functions in the biosynthesis of branched-chain amino acids. Catalyzes the dehydration of (2R,3R)-2,3-dihydroxy-3-methylpentanoate (2,3-dihydroxy-3-methylvalerate) into 2-oxo-3-methylpentanoate (2-oxo-3-methylvalerate) and of (2R)-2,3-dihydroxy-3-methylbutanoate (2,3-dihydroxyisovalerate) into 2-oxo-3-methylbutanoate (2-oxoisovalerate), the penultimate precursor to L-isoleucine and L-valine, respectively. The protein is Dihydroxy-acid dehydratase of Methanosarcina barkeri (strain Fusaro / DSM 804).